Here is a 291-residue protein sequence, read N- to C-terminus: Lipoyl synthase (291 aa).

Cysteine 33, cysteine 38, cysteine 44, cysteine 59, cysteine 63, cysteine 66, and serine 274 together coordinate [4Fe-4S] cluster. A Radical SAM core domain is found at 45-263; it reads WGEGTATFLI…REAAEAMGFK (219 aa).

It belongs to the radical SAM superfamily. Lipoyl synthase family. It depends on [4Fe-4S] cluster as a cofactor.

The protein resides in the cytoplasm. It catalyses the reaction [[Fe-S] cluster scaffold protein carrying a second [4Fe-4S](2+) cluster] + N(6)-octanoyl-L-lysyl-[protein] + 2 oxidized [2Fe-2S]-[ferredoxin] + 2 S-adenosyl-L-methionine + 4 H(+) = [[Fe-S] cluster scaffold protein] + N(6)-[(R)-dihydrolipoyl]-L-lysyl-[protein] + 4 Fe(3+) + 2 hydrogen sulfide + 2 5'-deoxyadenosine + 2 L-methionine + 2 reduced [2Fe-2S]-[ferredoxin]. It functions in the pathway protein modification; protein lipoylation via endogenous pathway; protein N(6)-(lipoyl)lysine from octanoyl-[acyl-carrier-protein]: step 2/2. Functionally, catalyzes the radical-mediated insertion of two sulfur atoms into the C-6 and C-8 positions of the octanoyl moiety bound to the lipoyl domains of lipoate-dependent enzymes, thereby converting the octanoylated domains into lipoylated derivatives. The polypeptide is Lipoyl synthase (Pyrobaculum calidifontis (strain DSM 21063 / JCM 11548 / VA1)).